We begin with the raw amino-acid sequence, 59 residues long: MAVQQNKKSPSKRDMHRAHDFLTAPATAVEATTGEAHLRHHISPNGYYRGRKVVKTNND.

The protein belongs to the bacterial ribosomal protein bL32 family.

The protein is Large ribosomal subunit protein bL32 of Polynucleobacter necessarius subsp. necessarius (strain STIR1).